A 506-amino-acid polypeptide reads, in one-letter code: BTB/POZ domain and ankyrin repeat-containing protein NPR5 (506 aa).

The BTB domain maps to serine 23 to proline 131. The segment at arginine 137–alanine 151 adopts a C2HC NPR-type zinc-finger fold. The Zn(2+) site is built by cysteine 140, cysteine 145, histidine 147, and cysteine 150. ANK repeat units follow at residues histidine 278–leucine 306, aspartate 307–histidine 337, alanine 342–valine 371, and aspartate 375–leucine 409. The interval lysine 481–proline 506 is disordered.

This sequence belongs to the plant 'ANKYRIN-BTB/POZ' family. 'NOOT-BOP-COCH-like' (NBCL) subfamily. In terms of assembly, homodimer. Interacts with TGAL5, TGAL7, TGAL8 and TGAL11.

The protein localises to the nucleus. Its subcellular location is the cytoplasm. The protein operates within protein modification; protein ubiquitination. Its function is as follows. May act as a substrate-specific adapter of an E3 ubiquitin-protein ligase complex (CUL3-RBX1-BTB) which mediates the ubiquitination and subsequent proteasomal degradation of target proteins. Transcriptional co-regulator involved in the promotion of leaf and floral meristem fate and determinacy. Required for the abscission of senescent organs, probably by regulating the cell wall disorganization in abscission zones (AZs, e.g. pulvini at the base of leaves). Maybe involved in defense response against pathogens. This Oryza sativa subsp. japonica (Rice) protein is BTB/POZ domain and ankyrin repeat-containing protein NPR5.